We begin with the raw amino-acid sequence, 623 residues long: Leucine-rich repeat, immunoglobulin-like domain and transmembrane domain-containing protein 1 (623 aa).

Residues Met-1–Ser-21 form the signal peptide. Positions Phe-22 to Pro-59 constitute an LRRNT domain. Over Phe-22–Arg-526 the chain is Lumenal. LRR repeat units lie at residues Asp-60 to Pro-81, Arg-84 to Gly-105, Arg-108 to Lys-128, Gln-132 to Phe-153, and Asn-156 to Thr-177. N-linked (GlcNAc...) asparagine glycosylation is present at Asn-156. Residues Asn-201–Ser-253 enclose the LRRCT domain. An Ig-like C2-type domain is found at Pro-266–Asn-332. Cys-275 and Cys-328 are oxidised to a cystine. Asn-296 and Asn-455 each carry an N-linked (GlcNAc...) asparagine glycan. The Fibronectin type-III domain occupies Met-430 to Val-518. One copy of the LRR 6 repeat lies at Gln-525–Cys-548. The helical transmembrane segment at Leu-527–Val-547 threads the bilayer. At Cys-548–Cys-623 the chain is on the cytoplasmic side.

As to quaternary structure, homodimer. Interacts with LRIT2; may form a heterodimer with LRIT2. Interacts (via its N-terminal extracellular domain) with metabotropic glutamate receptor GRM6. Interacts (via its extreme C-terminus) with the scaffold protein FRMPD2 (via the third PDZ domain); the interaction leads to their colocalization in photoreceptor synapses. In terms of tissue distribution, retina, outer segments of photoreceptor cells.

The protein resides in the endoplasmic reticulum membrane. It is found in the cell projection. It localises to the dendrite. In terms of biological role, photoreceptor synaptic protein essential for normal vision. Involved in synapse formation in cone photoreceptor cells. The chain is Leucine-rich repeat, immunoglobulin-like domain and transmembrane domain-containing protein 1 (Lrit1) from Rattus norvegicus (Rat).